The chain runs to 129 residues: UPF0102 protein Mnod_0024 (129 aa).

This sequence belongs to the UPF0102 family.

The polypeptide is UPF0102 protein Mnod_0024 (Methylobacterium nodulans (strain LMG 21967 / CNCM I-2342 / ORS 2060)).